The following is a 147-amino-acid chain: UPAR/Ly6 domain-containing protein CG9338 (147 aa).

The signal sequence occupies residues Met1 to Ala23. The Extracellular portion of the chain corresponds to Ile24–Thr126. Disulfide bonds link Cys26–Cys72, Cys29–Cys37, Cys51–Cys89, Cys101–Cys115, and Cys118–Cys123. The N-linked (GlcNAc...) asparagine glycan is linked to Asn68. Asn124 carries the GPI-anchor amidated asparagine lipid modification. A propeptide spans Gly125 to Ala147 (removed in mature form). Residues Ser127–Ala147 form a helical membrane-spanning segment.

The protein belongs to the quiver family.

It localises to the cell membrane. In terms of biological role, may be involved in regulating neuron excitability. This is UPAR/Ly6 domain-containing protein CG9338 from Drosophila melanogaster (Fruit fly).